A 224-amino-acid polypeptide reads, in one-letter code: Octanoyltransferase (224 aa).

A BPL/LPL catalytic domain is found at 29–224 (PGTPDELWLC…GDRLESYLSP (196 aa)). Substrate-binding positions include 68 to 75 (RGGQVTYH), 157 to 159 (ALG), and 170 to 172 (GLA). Cys-188 serves as the catalytic Acyl-thioester intermediate.

The protein belongs to the LipB family.

The protein resides in the cytoplasm. It catalyses the reaction octanoyl-[ACP] + L-lysyl-[protein] = N(6)-octanoyl-L-lysyl-[protein] + holo-[ACP] + H(+). The protein operates within protein modification; protein lipoylation via endogenous pathway; protein N(6)-(lipoyl)lysine from octanoyl-[acyl-carrier-protein]: step 1/2. Catalyzes the transfer of endogenously produced octanoic acid from octanoyl-acyl-carrier-protein onto the lipoyl domains of lipoate-dependent enzymes. Lipoyl-ACP can also act as a substrate although octanoyl-ACP is likely to be the physiological substrate. The chain is Octanoyltransferase from Methylibium petroleiphilum (strain ATCC BAA-1232 / LMG 22953 / PM1).